We begin with the raw amino-acid sequence, 135 residues long: UPF0299 membrane protein YE2790 (135 aa).

Helical transmembrane passes span 4–24 (VTSL…CLWA), 30–50 (LLLP…FALL), 63–83 (GCHL…VGVM), and 93–113 (FGPI…VVGY).

This sequence belongs to the UPF0299 family.

It is found in the cell inner membrane. The protein is UPF0299 membrane protein YE2790 of Yersinia enterocolitica serotype O:8 / biotype 1B (strain NCTC 13174 / 8081).